A 197-amino-acid polypeptide reads, in one-letter code: Phosphoheptose isomerase (197 aa).

The SIS domain maps to 36-197 (MVQCLVSEGK…IDQQLFGSTE (162 aa)). 51-53 (NGG) contacts substrate. Zn(2+) contacts are provided by His-60 and Glu-64. Substrate contacts are provided by residues Glu-64, 93-94 (ND), 119-121 (STS), Ser-124, and Gln-174. Zn(2+) is bound by residues Gln-174 and His-182.

The protein belongs to the SIS family. GmhA subfamily. In terms of assembly, homotetramer. Zn(2+) serves as cofactor.

It is found in the cytoplasm. The enzyme catalyses 2 D-sedoheptulose 7-phosphate = D-glycero-alpha-D-manno-heptose 7-phosphate + D-glycero-beta-D-manno-heptose 7-phosphate. Its pathway is carbohydrate biosynthesis; D-glycero-D-manno-heptose 7-phosphate biosynthesis; D-glycero-alpha-D-manno-heptose 7-phosphate and D-glycero-beta-D-manno-heptose 7-phosphate from sedoheptulose 7-phosphate: step 1/1. Its function is as follows. Catalyzes the isomerization of sedoheptulose 7-phosphate in D-glycero-D-manno-heptose 7-phosphate. This chain is Phosphoheptose isomerase, found in Chromohalobacter salexigens (strain ATCC BAA-138 / DSM 3043 / CIP 106854 / NCIMB 13768 / 1H11).